Reading from the N-terminus, the 375-residue chain is Killer cell immunoglobulin-like receptor 2DL5B (375 aa).

An N-terminal signal peptide occupies residues 1 to 21; it reads MSLMVVSMACVGFFLLQGAWT. Residues 22-238 lie on the Extracellular side of the membrane; the sequence is HEGGQDKPLL…PSSKTGIRRH (217 aa). Ig-like C2-type domains lie at 42-102 and 137-200; these read GGHV…HPRS and GENV…LHDS. 2 disulfides stabilise this stretch: cysteine 49/cysteine 95 and cysteine 144/cysteine 193. Positions 213 to 233 are disordered; the sequence is VSVTGNSSSSSSSPTEPSSKT. Residue asparagine 218 is glycosylated (N-linked (GlcNAc...) asparagine). Positions 219-231 are enriched in low complexity; sequence SSSSSSSPTEPSS. A helical transmembrane segment spans residues 239-259; sequence LHILIGTSVAIILFIILFFFL. Residues 260 to 375 lie on the Cytoplasmic side of the membrane; sequence LHCCCSNKKN…ASSHVPAAGI (116 aa). A disordered region spans residues 334-375; it reads AKPRSLSPAHKHHSQALRGSSRETTALSQNRVASSHVPAAGI. Residues 355–366 show a composition bias toward polar residues; that stretch reads RETTALSQNRVA.

The protein belongs to the immunoglobulin superfamily.

The protein resides in the cell membrane. Functionally, receptor on natural killer (NK) cells for HLA-C alleles. Inhibits the activity of NK cells thus preventing cell lysis. The protein is Killer cell immunoglobulin-like receptor 2DL5B (KIR2DL5B) of Homo sapiens (Human).